We begin with the raw amino-acid sequence, 184 residues long: uncharacterized protein (184 aa).

The N-terminal stretch at 1-20 (MTLRKILALTCLLLPMMASA) is a signal peptide.

To H.influenzae HI_0045.

Its subcellular location is the periplasm. This is an uncharacterized protein from Escherichia coli (strain K12).